The primary structure comprises 211 residues: Phosphoheptose isomerase (211 aa).

The SIS domain occupies 50–211; sequence IAGTFEDGGK…VERMLGYCRL (162 aa). 65 to 67 is a binding site for substrate; that stretch reads NGG. Zn(2+)-binding residues include histidine 74 and glutamate 78. Substrate is bound by residues glutamate 78, 109–110, 135–137, serine 140, and glutamine 188; these read ND and STS. The Zn(2+) site is built by glutamine 188 and histidine 196.

This sequence belongs to the SIS family. GmhA subfamily. Requires Zn(2+) as cofactor.

It is found in the cytoplasm. The catalysed reaction is 2 D-sedoheptulose 7-phosphate = D-glycero-alpha-D-manno-heptose 7-phosphate + D-glycero-beta-D-manno-heptose 7-phosphate. It functions in the pathway carbohydrate biosynthesis; D-glycero-D-manno-heptose 7-phosphate biosynthesis; D-glycero-alpha-D-manno-heptose 7-phosphate and D-glycero-beta-D-manno-heptose 7-phosphate from sedoheptulose 7-phosphate: step 1/1. Functionally, catalyzes the isomerization of sedoheptulose 7-phosphate in D-glycero-D-manno-heptose 7-phosphate. In Pelodictyon phaeoclathratiforme (strain DSM 5477 / BU-1), this protein is Phosphoheptose isomerase.